Reading from the N-terminus, the 142-residue chain is Nucleoside diphosphate kinase (142 aa).

Lys11, Phe59, Arg87, Thr93, Arg104, and Asn114 together coordinate ATP. Catalysis depends on His117, which acts as the Pros-phosphohistidine intermediate.

The protein belongs to the NDK family. In terms of assembly, homotetramer. Mg(2+) serves as cofactor.

It is found in the cytoplasm. It carries out the reaction a 2'-deoxyribonucleoside 5'-diphosphate + ATP = a 2'-deoxyribonucleoside 5'-triphosphate + ADP. It catalyses the reaction a ribonucleoside 5'-diphosphate + ATP = a ribonucleoside 5'-triphosphate + ADP. Major role in the synthesis of nucleoside triphosphates other than ATP. The ATP gamma phosphate is transferred to the NDP beta phosphate via a ping-pong mechanism, using a phosphorylated active-site intermediate. This is Nucleoside diphosphate kinase from Thiobacillus denitrificans (strain ATCC 25259 / T1).